The primary structure comprises 293 residues: Probable xyloglucan endotransglucosylase/hydrolase protein 7 (293 aa).

Residues 1-29 (MVVSLFSSRNVFYTLSLCLFAALYQPVMS) form the signal peptide. Residues 30 to 223 (RPAKFEDDFR…WSRAPFYAYY (194 aa)) enclose the GH16 domain. E109 serves as the catalytic Nucleophile. E113 serves as the catalytic Proton donor. E113 is a binding site for xyloglucan. N117 carries N-linked (GlcNAc...) asparagine glycosylation. Xyloglucan contacts are provided by residues 126–128 (QTN), 136–138 (DRE), 202–203 (DW), and G207. N213 is a glycosylation site (N-linked (GlcNAc...) asparagine). Cystine bridges form between C231–C239 and C276–C289. Residue R281 participates in xyloglucan binding.

Belongs to the glycosyl hydrolase 16 family. XTH group 1 subfamily. Contains at least one intrachain disulfide bond essential for its enzymatic activity.

The protein localises to the secreted. It is found in the cell wall. Its subcellular location is the extracellular space. The protein resides in the apoplast. The enzyme catalyses breaks a beta-(1-&gt;4) bond in the backbone of a xyloglucan and transfers the xyloglucanyl segment on to O-4 of the non-reducing terminal glucose residue of an acceptor, which can be a xyloglucan or an oligosaccharide of xyloglucan.. Catalyzes xyloglucan endohydrolysis (XEH) and/or endotransglycosylation (XET). Cleaves and religates xyloglucan polymers, an essential constituent of the primary cell wall, and thereby participates in cell wall construction of growing tissues. This chain is Probable xyloglucan endotransglucosylase/hydrolase protein 7 (XTH7), found in Arabidopsis thaliana (Mouse-ear cress).